Reading from the N-terminus, the 217-residue chain is Ribosome maturation factor RimM (217 aa).

Residues 115–186 form the PRC barrel domain; it reads EDAWYDNQLV…TVTLTPPPGL (72 aa). A disordered region spans residues 181–217; sequence TPPPGLFEDLPDDAPAAGDESEPVSPPVTAEETPGGE.

This sequence belongs to the RimM family. In terms of assembly, binds ribosomal protein uS19.

The protein localises to the cytoplasm. An accessory protein needed during the final step in the assembly of 30S ribosomal subunit, possibly for assembly of the head region. Essential for efficient processing of 16S rRNA. May be needed both before and after RbfA during the maturation of 16S rRNA. It has affinity for free ribosomal 30S subunits but not for 70S ribosomes. The chain is Ribosome maturation factor RimM from Leifsonia xyli subsp. xyli (strain CTCB07).